Consider the following 126-residue polypeptide: Protein ApaG (126 aa).

An ApaG domain is found at 2–126 (RRKPYELKVE…FSLAIPRRLH (125 aa)).

The polypeptide is Protein ApaG (Methylococcus capsulatus (strain ATCC 33009 / NCIMB 11132 / Bath)).